Reading from the N-terminus, the 337-residue chain is Glyceraldehyde-3-phosphate dehydrogenase (337 aa).

NAD(+) contacts are provided by residues 12 to 13 (RI), Asp-34, and Arg-79. D-glyceraldehyde 3-phosphate contacts are provided by residues 150 to 152 (SCT), Thr-181, 210 to 211 (TG), and Arg-233. The active-site Nucleophile is Cys-151. Asn-315 serves as a coordination point for NAD(+).

Belongs to the glyceraldehyde-3-phosphate dehydrogenase family. In terms of assembly, homotetramer.

It localises to the cytoplasm. The enzyme catalyses D-glyceraldehyde 3-phosphate + phosphate + NAD(+) = (2R)-3-phospho-glyceroyl phosphate + NADH + H(+). Its pathway is carbohydrate degradation; glycolysis; pyruvate from D-glyceraldehyde 3-phosphate: step 1/5. This chain is Glyceraldehyde-3-phosphate dehydrogenase (GPD), found in Coccidioides posadasii (strain C735) (Valley fever fungus).